The chain runs to 227 residues: Cytochrome c oxidase subunit 2 (227 aa).

Residues 1–14 (MAYPMQLGFQDATS) lie on the Mitochondrial intermembrane side of the membrane. Residues 15 to 45 (PIMEELLHFHDHTLMIVFLISSLVLYIISLM) form a helical membrane-spanning segment. At 46 to 59 (LTTKLTHTSTMDAQ) the chain is on the mitochondrial matrix side. A helical membrane pass occupies residues 60-87 (EVETVWTILPAIILIMIALPSLRILYMM). The Mitochondrial intermembrane portion of the chain corresponds to 88-227 (DEINNPSLTV…YFEKWSASML (140 aa)). Residues H161, C196, E198, C200, H204, and M207 each contribute to the Cu cation site. E198 serves as a coordination point for Mg(2+). The residue at position 218 (Y218) is a Phosphotyrosine.

This sequence belongs to the cytochrome c oxidase subunit 2 family. Component of the cytochrome c oxidase (complex IV, CIV), a multisubunit enzyme composed of 14 subunits. The complex is composed of a catalytic core of 3 subunits MT-CO1, MT-CO2 and MT-CO3, encoded in the mitochondrial DNA, and 11 supernumerary subunits COX4I, COX5A, COX5B, COX6A, COX6B, COX6C, COX7A, COX7B, COX7C, COX8 and NDUFA4, which are encoded in the nuclear genome. The complex exists as a monomer or a dimer and forms supercomplexes (SCs) in the inner mitochondrial membrane with NADH-ubiquinone oxidoreductase (complex I, CI) and ubiquinol-cytochrome c oxidoreductase (cytochrome b-c1 complex, complex III, CIII), resulting in different assemblies (supercomplex SCI(1)III(2)IV(1) and megacomplex MCI(2)III(2)IV(2)). Found in a complex with TMEM177, COA6, COX18, COX20, SCO1 and SCO2. Interacts with TMEM177 in a COX20-dependent manner. Interacts with COX20. Interacts with COX16. Cu cation serves as cofactor.

It is found in the mitochondrion inner membrane. The catalysed reaction is 4 Fe(II)-[cytochrome c] + O2 + 8 H(+)(in) = 4 Fe(III)-[cytochrome c] + 2 H2O + 4 H(+)(out). In terms of biological role, component of the cytochrome c oxidase, the last enzyme in the mitochondrial electron transport chain which drives oxidative phosphorylation. The respiratory chain contains 3 multisubunit complexes succinate dehydrogenase (complex II, CII), ubiquinol-cytochrome c oxidoreductase (cytochrome b-c1 complex, complex III, CIII) and cytochrome c oxidase (complex IV, CIV), that cooperate to transfer electrons derived from NADH and succinate to molecular oxygen, creating an electrochemical gradient over the inner membrane that drives transmembrane transport and the ATP synthase. Cytochrome c oxidase is the component of the respiratory chain that catalyzes the reduction of oxygen to water. Electrons originating from reduced cytochrome c in the intermembrane space (IMS) are transferred via the dinuclear copper A center (CU(A)) of subunit 2 and heme A of subunit 1 to the active site in subunit 1, a binuclear center (BNC) formed by heme A3 and copper B (CU(B)). The BNC reduces molecular oxygen to 2 water molecules using 4 electrons from cytochrome c in the IMS and 4 protons from the mitochondrial matrix. In Capra hircus (Goat), this protein is Cytochrome c oxidase subunit 2 (MT-CO2).